Consider the following 187-residue polypeptide: Peptide deformylase (187 aa).

Residues Cys-94 and His-136 each coordinate Fe cation. Residue Glu-137 is part of the active site. His-140 provides a ligand contact to Fe cation.

This sequence belongs to the polypeptide deformylase family. Requires Fe(2+) as cofactor.

The catalysed reaction is N-terminal N-formyl-L-methionyl-[peptide] + H2O = N-terminal L-methionyl-[peptide] + formate. Its function is as follows. Removes the formyl group from the N-terminal Met of newly synthesized proteins. Requires at least a dipeptide for an efficient rate of reaction. N-terminal L-methionine is a prerequisite for activity but the enzyme has broad specificity at other positions. This is Peptide deformylase from Chlorobaculum parvum (strain DSM 263 / NCIMB 8327) (Chlorobium vibrioforme subsp. thiosulfatophilum).